Reading from the N-terminus, the 58-residue chain is MSKTVVRKNESLDDALRRFKRAVTKAGTLQETRKREFYEKPSVKRKRKSEVARKRKKF.

The interval 39 to 58 (EKPSVKRKRKSEVARKRKKF) is disordered. The segment covering 43–58 (VKRKRKSEVARKRKKF) has biased composition (basic residues).

It belongs to the bacterial ribosomal protein bS21 family.

The chain is Small ribosomal subunit protein bS21 from Streptococcus pneumoniae (strain ATCC BAA-255 / R6).